A 409-amino-acid chain; its full sequence is DNA primase small subunit (409 aa).

Residues Glu46, Asp111, and Asp113 contribute to the active site. A Zinc knuckle motif motif is present at residues 123-133 (CCSGAQVCSKC).

This sequence belongs to the eukaryotic-type primase small subunit family. As to quaternary structure, DNA polymerase alpha:primase is a four subunit enzyme complex, which is assembled throughout the cell cycle, and consists of the two DNA polymerase subunits A POL1 and B POL12, and the DNA primase large PRI2 and small PRI1 subunits.

Its function is as follows. DNA primase is the polymerase that synthesizes small RNA primers for the Okazaki fragments made during discontinuous DNA replication. In a complex with DNA polymerase alpha (DNA polymerase alpha:primase) constitutes a replicative polymerase. Both primase components participate in formation of the active center, but the ATP-binding site is exclusively located on p48. This is DNA primase small subunit (PRI1) from Saccharomyces cerevisiae (strain ATCC 204508 / S288c) (Baker's yeast).